The following is a 318-amino-acid chain: Magnetosome protein MamM (318 aa).

Residues Met1–Asp210 form a transmembrane domain (TMD) region. 4 helical membrane passes run Ile13–Leu33, Ala39–Ile59, Phe81–His101, and Leu117–Ser137. The C-terminal domain (CTD) stretch occupies residues His211 to Asn318. Residues Asp249, His264, His285, and Glu289 each contribute to the Fe cation site.

This sequence belongs to the cation diffusion facilitator (CDF) transporter (TC 2.A.4) family. In terms of assembly, forms homodimers via its C-terminal domain (CTD) in the presence of metal cations. Interacts with MamB via their CTD.

The protein localises to the magnetosome membrane. It localises to the cell inner membrane. Functionally, probably plays a role in biomineralization. Required for stable accumulation of MamB. Probably binds and transports iron. May nucleate iron crystal formation. This is Magnetosome protein MamM (mamM) from Paramagnetospirillum magneticum (strain ATCC 700264 / AMB-1) (Magnetospirillum magneticum).